Reading from the N-terminus, the 592-residue chain is Alanine aminotransferase, mitochondrial (592 aa).

Residues 1–64 (MLSLSAKNHF…RKVRPVLQRH (64 aa)) constitute a mitochondrion transit peptide. Ser-77 bears the Phosphoserine mark. 5 residues coordinate pyridoxal 5'-phosphate: Ala-258, Ser-259, Tyr-284, Asn-340, and Ser-409. Lys-412 is subject to N6-(pyridoxal phosphate)lysine. Arg-421 contacts pyridoxal 5'-phosphate.

Belongs to the class-I pyridoxal-phosphate-dependent aminotransferase family. Alanine aminotransferase subfamily. Homodimer. The cofactor is pyridoxal 5'-phosphate.

It is found in the mitochondrion matrix. The enzyme catalyses L-alanine + 2-oxoglutarate = pyruvate + L-glutamate. It functions in the pathway amino-acid degradation; L-alanine degradation via transaminase pathway; pyruvate from L-alanine: step 1/1. Alanine aminotransferase involved in both alanine biosynthesis and utilization. Under respiratory conditions, constitutes the sole pathway for alanine biosynthesis and catabolism. Under fermentative conditions, it plays a catabolic role and alanine is mainly synthesized through an alternative pathway. This is Alanine aminotransferase, mitochondrial (ALT1) from Saccharomyces cerevisiae (strain ATCC 204508 / S288c) (Baker's yeast).